The sequence spans 1115 residues: Calcium-transporting ATPase PAT1 (1115 aa).

Residues 1–99 (MTGSHEMESI…SIVLDALSDH (99 aa)) lie on the Stromal side of the membrane. Residues 100-120 (ILILLIVAAVVSIVLGSIDYT) traverse the membrane as a helical segment. Residues 121 to 126 (SDHPET) lie on the Lumenal side of the membrane. The chain crosses the membrane as a helical span at residues 127 to 147 (GWIDGVAILVAVILVVGITSL). Topologically, residues 148–235 (NDFKNQARFR…KGQPQDNMDP (88 aa)) are stromal. A helical membrane pass occupies residues 236–256 (FLISGSMVIEGFGTMLVTAVG). Topologically, residues 257 to 287 (VNSFNGKTMMGLRVASEDTPLQMKLSVLASR) are lumenal. Residues 288 to 308 (IGYFGMGAAILMLLIAIPKYF) form a helical membrane-spanning segment. Residues 309-328 (IQRKVHDIEITREDAQPIVQ) lie on the Stromal side of the membrane. A helical membrane pass occupies residues 329 to 349 (LVISAITIVVVAVPEGLPLAV). Topologically, residues 350–735 (TMALAYGMMK…GRNIYDAICK (386 aa)) are lumenal. Aspartate 385 functions as the 4-aspartylphosphate intermediate in the catalytic mechanism. Mg(2+) is bound by residues aspartate 678 and aspartate 682. The chain crosses the membrane as a helical span at residues 736 to 756 (FLQFQLTVNVVAVTVAFIGTL). Residues 757–832 (TSDVVEDKDN…GKNAPLITRS (76 aa)) are Stromal-facing. Residues 762–784 (EDKDNSSSSGSADKVTEEEPRQG) are disordered. A helical transmembrane segment spans residues 833–853 (MWKNIIGQAALQLAILFTILY). Residues 854-873 (QGHNIFQHFVPQAHGPIIKN) lie on the Lumenal side of the membrane. Residues 874–894 (GLHHYTLVFNCFVFLQLFNEI) traverse the membrane as a helical segment. The Stromal segment spans residues 895–913 (NARVLGSRTNPFKNFFNNP). A helical transmembrane segment spans residues 914 to 934 (IFIAVMIFTLGVQIIFVTFGG). Residues 935 to 943 (SATSTDSLY) are Lumenal-facing. The chain crosses the membrane as a helical span at residues 944-964 (IVEWICCVVVGAISLPVGLLL). The Stromal portion of the chain corresponds to 965 to 1115 (RKIPIREPVV…LHLPVNQINN (151 aa)). Positions 984-1056 (AVYTSPSPNP…IPSSSSNLVN (73 aa)) are disordered. The segment covering 1040–1053 (NDNINTPIPSSSSN) has biased composition (low complexity).

This sequence belongs to the cation transport ATPase (P-type) (TC 3.A.3) family. Type IIB subfamily.

It is found in the contractile vacuole membrane. It localises to the cell membrane. It carries out the reaction Ca(2+)(in) + ATP + H2O = Ca(2+)(out) + ADP + phosphate + H(+). In terms of biological role, calcium ATPase involved in Ca(2+) homeostasis as a component of the contractile vacuole complex. This is Calcium-transporting ATPase PAT1 (patA) from Dictyostelium discoideum (Social amoeba).